A 372-amino-acid chain; its full sequence is BTB/POZ and TAZ domain-containing protein 4 (372 aa).

The segment at S14–L37 is disordered. Residues A60–E128 form the BTB domain. A TAZ-type zinc finger spans residues R238–R330. Residues K341–P364 form a caM-binding region.

In terms of assembly, interacts with GTE11/BET10 through the BTB domain. As to expression, preferentially expressed in leaves, stems and flowers.

Its subcellular location is the cytoplasm. It participates in protein modification; protein ubiquitination. Its function is as follows. May act as a substrate-specific adapter of an E3 ubiquitin-protein ligase complex (CUL3-RBX1-BTB) which mediates the ubiquitination and subsequent proteasomal degradation of target proteins. The protein is BTB/POZ and TAZ domain-containing protein 4 (BT4) of Arabidopsis thaliana (Mouse-ear cress).